The sequence spans 193 residues: Potassium-transporting ATPase KdpC subunit (193 aa).

A helical membrane pass occupies residues 14–34; the sequence is ITFTFLVLCGLVYPLIVTGIA.

It belongs to the KdpC family. As to quaternary structure, the system is composed of three essential subunits: KdpA, KdpB and KdpC.

It localises to the cell membrane. Part of the high-affinity ATP-driven potassium transport (or Kdp) system, which catalyzes the hydrolysis of ATP coupled with the electrogenic transport of potassium into the cytoplasm. This subunit acts as a catalytic chaperone that increases the ATP-binding affinity of the ATP-hydrolyzing subunit KdpB by the formation of a transient KdpB/KdpC/ATP ternary complex. This is Potassium-transporting ATPase KdpC subunit from Bacillus anthracis (strain A0248).